The sequence spans 135 residues: Large ribosomal subunit protein eL32 (135 aa).

This sequence belongs to the eukaryotic ribosomal protein eL32 family.

This is Large ribosomal subunit protein eL32 (rpl32e) from Methanococcus maripaludis (strain DSM 14266 / JCM 13030 / NBRC 101832 / S2 / LL).